The primary structure comprises 61 residues: UPF0434 protein Sama_1339 (61 aa).

This sequence belongs to the UPF0434 family.

In Shewanella amazonensis (strain ATCC BAA-1098 / SB2B), this protein is UPF0434 protein Sama_1339.